The primary structure comprises 1285 residues: Peroxidasin homolog pxn-1 (1285 aa).

The N-terminal stretch at 1–20 (MNLYLLLLVIATSSWQFVAG) is a signal peptide. The 33-residue stretch at 21–53 (LECPVECTCDKKGLVVDCSSSGLTRIPKNISRN) folds into the LRRNT domain. LRR repeat units follow at residues 27-49 (CTCD…IPKN), 50-72 (ISRN…RSDL), 73-96 (EGFN…ENVL), 97-120 (DHLP…PLCS), 122-143 (SRPL…EQVL), 145-168 (YFPD…KLFD), and 204-227 (KVYC…SALT). An N-linked (GlcNAc...) asparagine glycan is attached at asparagine 49. Residues 180–228 (SNPWHCDCRASKVKALLQKVKWEKKVYCTNPVELRHQALDEVDDSALTC) form the LRRCT domain. N-linked (GlcNAc...) asparagine glycosylation occurs at asparagine 248. The interval 305 to 324 (RQSQHQGNGSPQFTYKPRDN) is disordered. Residues 307-317 (SQHQGNGSPQF) show a composition bias toward polar residues. Ig-like C2-type domains are found at residues 315-401 (PQFT…FSLD) and 408-495 (PNIY…AKLT). Cystine bridges form between cysteine 336/cysteine 385 and cysteine 429/cysteine 479. The stretch at 508–550 (QIDEELLRAIAQKARQNVENAVEKTRKQLTQDKVTNTNDLKRL) forms a coiled coil. An N-linked (GlcNAc...) asparagine glycan is attached at asparagine 595. Cysteines 625 and 641 form a disulfide. Aspartate 719 contacts heme b. Histidine 720 (proton acceptor) is an active-site residue. Ca(2+) is bound at residue aspartate 721. Cystine bridges form between cysteine 740/cysteine 750 and cysteine 744/cysteine 771. An N-linked (GlcNAc...) asparagine glycan is attached at asparagine 741. Residues threonine 803, phenylalanine 805, aspartate 807, and serine 809 each contribute to the Ca(2+) site. Asparagine 858 carries N-linked (GlcNAc...) asparagine glycosylation. Heme b is bound by residues glutamate 877 and histidine 973. LRR repeat units lie at residues 998–1022 (HKAF…GLFA) and 1049–1073 (VSLD…TEYR). Disulfide bonds link cysteine 1076/cysteine 1133 and cysteine 1174/cysteine 1201. The stretch at 1168-1189 (TLARLFCDNGDNIDRIQKDVFM) is one LRR 12 repeat.

The protein belongs to the peroxidase family. XPO subfamily. Ca(2+) is required as a cofactor. Heme b serves as cofactor. In terms of tissue distribution, expressed in the ventral nerve cord, the dorsal nerve cord, head neurons, GABAergic and cholinergic neurons, body wall muscles, vulval muscles, uterine muscles, intestine, the hypodermis and in coelomocytes.

The protein resides in the secreted. It localises to the extracellular space. Its subcellular location is the extracellular matrix. The enzyme catalyses L-lysyl-[collagen] + L-methionyl-[collagen] + H2O2 = [collagen]-L-lysyl-N-S-L-methionyl-[collagen] + 2 H2O + H(+). It catalyses the reaction bromide + H2O2 = hypobromite + H2O. It carries out the reaction L-lysyl-[collagen] + L-methionyl-[collagen] + hypobromite = [collagen]-L-lysyl-N-S-L-methionyl-[collagen] + bromide + H2O + H(+). The catalysed reaction is L-tyrosyl-[protein] + bromide + H2O2 + H(+) = 3-bromo-L-tyrosyl-[protein] + 2 H2O. The enzyme catalyses hypobromite + L-tyrosyl-[protein] + H(+) = 3-bromo-L-tyrosyl-[protein] + H2O. Its function is as follows. Catalyzes the two-electron oxidation of bromide by hydrogen peroxide and generates hypobromite as a reactive intermediate which mediates the formation of sulfilimine cross-links between methionine and hydroxylysine residues within an uncross-linked collagen IV NC1 hexamer. Plays a role in the attachment of tissues and in axonal guidance during early developmental stages. May functionally antagonize the peroxidasin pxn-2 to maintain neuronal development. This is Peroxidasin homolog pxn-1 from Caenorhabditis elegans.